Consider the following 766-residue polypeptide: 5-methyltetrahydropteroyltriglutamate--homocysteine methyltransferase 1 (766 aa).

2 residues coordinate 5-methyltetrahydropteroyltri-L-glutamate: Lys-18 and Asn-116. L-homocysteine is bound by residues 438-440 and Glu-491; that span reads IGS. L-methionine contacts are provided by residues 438 to 440 and Glu-491; that span reads IGS. 5-methyltetrahydropteroyltri-L-glutamate is bound by residues Asp-496, Tyr-519, 522–523, and Trp-568; that span reads RC. Asp-606 contributes to the L-homocysteine binding site. Asp-606 contacts L-methionine. Residues His-648, Cys-650, His-659, and Glu-672 each contribute to the Zn(2+) site. The Proton donor role is filled by His-702. Residue Cys-734 participates in Zn(2+) binding.

Belongs to the vitamin-B12 independent methionine synthase family. Requires Zn(2+) as cofactor.

It is found in the cytoplasm. Its subcellular location is the cytosol. The catalysed reaction is 5-methyltetrahydropteroyltri-L-glutamate + L-homocysteine = tetrahydropteroyltri-L-glutamate + L-methionine. It functions in the pathway amino-acid biosynthesis; L-methionine biosynthesis via de novo pathway; L-methionine from L-homocysteine (MetE route): step 1/1. Functionally, catalyzes the transfer of a methyl group from 5-methyltetrahydrofolate to homocysteine resulting in methionine formation. The chain is 5-methyltetrahydropteroyltriglutamate--homocysteine methyltransferase 1 from Oryza sativa subsp. japonica (Rice).